We begin with the raw amino-acid sequence, 478 residues long: MWLAAAAPSLARRLLFLGPPPPPLLLLVFSRSSRRRLHSLGLAAMPEKRPFERLPADVSPINCSLCLKPDLLDFTFEGKLEAAAQVRQATNQIVMNCADIDIITASYAPEGDEEIHATGFNYQNEDEKVTLSFPSTLQTGTGTLKIDFVGELNDKMKGFYRSKYTTPSGEVRYAAVTQFEATDARRAFPCWDERAIKATFDISLVVPKDRVALSNMNVIDRKPYPDDENLVEVKFARTPVTSTYLVAFVVGEYDFVETRSKDGVCVCVYTPVGKAEQGKFALEVAAKTLPFYKDYFNVPYPLPKIDLIAIADFAAGAMENWDLVTYRETALLIDPKNSCSSSRQWVALVVGHELAHQWFGNLVTMEWWTHLRLNEGFASWIEYLCVDHCFPEYDIWTQFVSADYTRAQELDALDNSHPIEVSVGHPSEVDEIFDAISYSKGASVIRMLHDYIGDKDFKKGMNMYLTKFQQKNAAAGNL.

Residues glutamate 180 and 316–320 (GAMEN) each bind substrate. Position 352 (histidine 352) interacts with Zn(2+). Catalysis depends on glutamate 353, which acts as the Proton acceptor. The Zn(2+) site is built by histidine 356 and glutamate 375.

It belongs to the peptidase M1 family. The cofactor is Zn(2+).

Aminopeptidase with broad substrate specificity to several peptides. In Homo sapiens (Human), this protein is Puromycin-sensitive aminopeptidase-like protein (NPEPPSL1).